The following is a 244-amino-acid chain: tRNA (guanine-N(7)-)-methyltransferase (244 aa).

A compositionally biased stretch (polar residues) spans 1–10; that stretch reads MSDTPQSPAQ. A disordered region spans residues 1 to 20; that stretch reads MSDTPQSPAQDSLAEHDEAR. Glu74, Glu99, Asp126, and Asp149 together coordinate S-adenosyl-L-methionine. Residue Asp149 is part of the active site. Residues Lys153, Asp185, and 222 to 225 each bind substrate; that span reads TKFE.

It belongs to the class I-like SAM-binding methyltransferase superfamily. TrmB family.

The enzyme catalyses guanosine(46) in tRNA + S-adenosyl-L-methionine = N(7)-methylguanosine(46) in tRNA + S-adenosyl-L-homocysteine. The protein operates within tRNA modification; N(7)-methylguanine-tRNA biosynthesis. Its function is as follows. Catalyzes the formation of N(7)-methylguanine at position 46 (m7G46) in tRNA. The sequence is that of tRNA (guanine-N(7)-)-methyltransferase from Pseudomonas aeruginosa (strain ATCC 15692 / DSM 22644 / CIP 104116 / JCM 14847 / LMG 12228 / 1C / PRS 101 / PAO1).